The following is a 740-amino-acid chain: Dynein regulatory complex protein 1 (740 aa).

A coiled-coil region spans residues 101–388 (IDIREIHRRV…QFKELQKAMR (288 aa)). The segment at 570–617 (ASMEKASMEETSTRSELELAEQTEMEGEKEESLVEGEKEEEEETPPSP) is disordered. Residues 575-586 (ASMEETSTRSEL) are compositionally biased toward basic and acidic residues. Residues 587 to 598 (ELAEQTEMEGEK) are compositionally biased toward acidic residues. Residues 691-724 (LTQRAKLLLENSSLEQQNTELQALLQQYLNSKIN) are a coiled coil.

The protein belongs to the DRC1 family. Component of the nexin-dynein regulatory complex (N-DRC). Interacts with CCDC65/DRC2, DRC3, GAS8/DRC4 and TCTE1/DRC5.

It localises to the cytoplasm. It is found in the cytoskeleton. The protein localises to the cilium axoneme. The protein resides in the flagellum axoneme. In terms of biological role, component of the nexin-dynein regulatory complex (N-DRC) a key regulator of ciliary/flagellar motility which maintains the alignment and integrity of the distal axoneme and regulates microtubule sliding in motile axonemes. Plays a critical role in the assembly of N-DRC and also stabilizes the assembly of multiple inner dynein arms and radial spokes. Coassembles with CCDC65/DRC2 to form a central scaffold needed for assembly of the N-DRC and its attachment to the outer doublet microtubules. The polypeptide is Dynein regulatory complex protein 1 (DRC1) (Homo sapiens (Human)).